The chain runs to 461 residues: Porin AaxA (461 aa).

Residues 1-22 (MSFRSVLLTALLSLSFTTTMQA) form the signal peptide.

Belongs to the OprB family.

The protein resides in the cell outer membrane. Functionally, facilitates L-arginine uptake, as part of the AaxABC system. The arginine uptake by the bacterium in the macrophage may be a virulence factor against the host innate immune response. This chain is Porin AaxA (aaxA), found in Chlamydia trachomatis serovar D (strain ATCC VR-885 / DSM 19411 / UW-3/Cx).